A 436-amino-acid polypeptide reads, in one-letter code: GTPase Der (436 aa).

EngA-type G domains lie at 4-167 and 176-351; these read PIVA…KEEE and IRLS…ENHK. GTP-binding positions include 10 to 17, 57 to 61, 119 to 122, 182 to 189, 229 to 233, and 294 to 297; these read GRPNVGKS, DTGGI, NKVD, DTAGM, and NKWD. The KH-like domain maps to 352-436; it reads KRVQSSTLNE…PVHIIARKRN (85 aa).

It belongs to the TRAFAC class TrmE-Era-EngA-EngB-Septin-like GTPase superfamily. EngA (Der) GTPase family. In terms of assembly, associates with the 50S ribosomal subunit.

GTPase that plays an essential role in the late steps of ribosome biogenesis. The sequence is that of GTPase Der from Staphylococcus saprophyticus subsp. saprophyticus (strain ATCC 15305 / DSM 20229 / NCIMB 8711 / NCTC 7292 / S-41).